The chain runs to 170 residues: uncharacterized protein (170 aa).

5 helical membrane passes run 21–41 (NISL…AAVL), 55–75 (AYTS…TLLL), 86–106 (TGIA…YWLW), 117–137 (ISGV…VSLL), and 143–163 (FSAA…TLLP). Residues 35 to 161 (IIFAAVLRWT…IMLATLGSTL (127 aa)) form the EamA domain.

It belongs to the EamA transporter family.

Its subcellular location is the cell membrane. This is an uncharacterized protein from Haemophilus influenzae (strain ATCC 51907 / DSM 11121 / KW20 / Rd).